The primary structure comprises 514 residues: Bifunctional purine biosynthesis protein PurH (514 aa).

The MGS-like domain occupies 1–143 (MTRRALISVS…KNHAGVLVLV (143 aa)).

Belongs to the PurH family.

The enzyme catalyses (6R)-10-formyltetrahydrofolate + 5-amino-1-(5-phospho-beta-D-ribosyl)imidazole-4-carboxamide = 5-formamido-1-(5-phospho-D-ribosyl)imidazole-4-carboxamide + (6S)-5,6,7,8-tetrahydrofolate. The catalysed reaction is IMP + H2O = 5-formamido-1-(5-phospho-D-ribosyl)imidazole-4-carboxamide. It functions in the pathway purine metabolism; IMP biosynthesis via de novo pathway; 5-formamido-1-(5-phospho-D-ribosyl)imidazole-4-carboxamide from 5-amino-1-(5-phospho-D-ribosyl)imidazole-4-carboxamide (10-formyl THF route): step 1/1. It participates in purine metabolism; IMP biosynthesis via de novo pathway; IMP from 5-formamido-1-(5-phospho-D-ribosyl)imidazole-4-carboxamide: step 1/1. In Deinococcus geothermalis (strain DSM 11300 / CIP 105573 / AG-3a), this protein is Bifunctional purine biosynthesis protein PurH.